Here is a 211-residue protein sequence, read N- to C-terminus: Thiamine-phosphate synthase (211 aa).

4-amino-2-methyl-5-(diphosphooxymethyl)pyrimidine is bound by residues 37–41 (QLRIK) and N69. Mg(2+)-binding residues include D70 and D89. S108 contacts 4-amino-2-methyl-5-(diphosphooxymethyl)pyrimidine. Position 134 to 136 (134 to 136 (TQT)) interacts with 2-[(2R,5Z)-2-carboxy-4-methylthiazol-5(2H)-ylidene]ethyl phosphate. K137 is a binding site for 4-amino-2-methyl-5-(diphosphooxymethyl)pyrimidine. 2-[(2R,5Z)-2-carboxy-4-methylthiazol-5(2H)-ylidene]ethyl phosphate-binding positions include G166 and 186–187 (VS).

Belongs to the thiamine-phosphate synthase family. Requires Mg(2+) as cofactor.

It carries out the reaction 2-[(2R,5Z)-2-carboxy-4-methylthiazol-5(2H)-ylidene]ethyl phosphate + 4-amino-2-methyl-5-(diphosphooxymethyl)pyrimidine + 2 H(+) = thiamine phosphate + CO2 + diphosphate. The catalysed reaction is 2-(2-carboxy-4-methylthiazol-5-yl)ethyl phosphate + 4-amino-2-methyl-5-(diphosphooxymethyl)pyrimidine + 2 H(+) = thiamine phosphate + CO2 + diphosphate. It catalyses the reaction 4-methyl-5-(2-phosphooxyethyl)-thiazole + 4-amino-2-methyl-5-(diphosphooxymethyl)pyrimidine + H(+) = thiamine phosphate + diphosphate. It functions in the pathway cofactor biosynthesis; thiamine diphosphate biosynthesis; thiamine phosphate from 4-amino-2-methyl-5-diphosphomethylpyrimidine and 4-methyl-5-(2-phosphoethyl)-thiazole: step 1/1. Functionally, condenses 4-methyl-5-(beta-hydroxyethyl)thiazole monophosphate (THZ-P) and 2-methyl-4-amino-5-hydroxymethyl pyrimidine pyrophosphate (HMP-PP) to form thiamine monophosphate (TMP). The protein is Thiamine-phosphate synthase of Escherichia coli O139:H28 (strain E24377A / ETEC).